Consider the following 104-residue polypeptide: Integration host factor subunit beta (104 aa).

The protein belongs to the bacterial histone-like protein family. Heterodimer of an alpha and a beta chain.

Its function is as follows. This protein is one of the two subunits of integration host factor, a specific DNA-binding protein that functions in genetic recombination as well as in transcriptional and translational control. The sequence is that of Integration host factor subunit beta (ihfB) from Neisseria gonorrhoeae.